Here is a 238-residue protein sequence, read N- to C-terminus: Histone deacetylase 7 (238 aa).

Disordered regions lie at residues 1–26 and 47–72; these read TPGS…PEPA and QQQR…GQQE. The segment at 58 to 158 is interaction with MEF2A; it reads SMDPPLPELQ…LPTEPPEHFP (101 aa). Residues serine 118 and serine 164 each carry the phosphoserine modification. The interval 145–238 is disordered; sequence PVPSLPTEPP…NPALGSEADG (94 aa). Positions 176-190 are enriched in basic and acidic residues; sequence KSLERRKNPLLRKES. Serine 190 is subject to Phosphoserine; by PKD/PRKD2. A compositionally biased stretch (low complexity) spans 206–221; sequence SSPSSSSTPASGCSSP.

Belongs to the histone deacetylase family. HD type 2 subfamily. In terms of assembly, interacts with HDAC1, HDAC2, HDAC3, HDAC4, HDAC5, NCOR1, NCOR2, SIN3A, SIN3B, RBBP4, RBBP7, MTA1L1, SAP30 and MBD3. Interacts with KAT5 and EDNRA. Interacts with the 14-3-3 protein YWHAE, MEF2A, MEF2B and MEF2C. Interacts with ZMYND15. Interacts with KDM5B. Interacts with PML. Interacts with FOXP3. Interacts with RARA. In terms of processing, may be phosphorylated by CaMK1. Phosphorylated by the PKC kinases PKN1 and PKN2, impairing nuclear import. Phosphorylation at Ser-164 by MARK2, MARK3 and PRKD1 promotes interaction with 14-3-3 proteins and export from the nucleus. Phosphorylation at Ser-164 is a prerequisite for phosphorylation at Ser-190.

Its subcellular location is the nucleus. It is found in the cytoplasm. It catalyses the reaction N(6)-acetyl-L-lysyl-[histone] + H2O = L-lysyl-[histone] + acetate. The catalysed reaction is N(6)-acetyl-L-lysyl-[protein] + H2O = L-lysyl-[protein] + acetate. Responsible for the deacetylation of lysine residues on the N-terminal part of the core histones (H2A, H2B, H3 and H4). Histone deacetylation gives a tag for epigenetic repression and plays an important role in transcriptional regulation, cell cycle progression and developmental events. Histone deacetylases act via the formation of large multiprotein complexes. Involved in muscle maturation by repressing transcription of myocyte enhancer factors such as MEF2A, MEF2B and MEF2C. During muscle differentiation, it shuttles into the cytoplasm, allowing the expression of myocyte enhancer factors. May be involved in Epstein-Barr virus (EBV) latency, possibly by repressing the viral BZLF1 gene. Positively regulates the transcriptional repressor activity of FOXP3. Serves as a corepressor of RARA, causing its deacetylation and inhibition of RARE DNA element binding. In association with RARA, plays a role in the repression of microRNA-10a and thereby in the inflammatory response. Also acetylates non-histone proteins, such as ALKBH5. The protein is Histone deacetylase 7 (Hdac7) of Rattus norvegicus (Rat).